The primary structure comprises 190 residues: Protein PLANT CADMIUM RESISTANCE 10 (190 aa).

The next 2 membrane-spanning stretches (helical) occupy residues 78–98 (LLGS…WALV) and 108–125 (GALL…ACGY).

Belongs to the cornifelin family.

The protein localises to the membrane. Functionally, may be involved in cadmium resistance. The polypeptide is Protein PLANT CADMIUM RESISTANCE 10 (PCR10) (Arabidopsis thaliana (Mouse-ear cress)).